We begin with the raw amino-acid sequence, 789 residues long: DNA replication helicase (789 aa).

Position 64-71 (64-71 (GTAGAGKS)) interacts with ATP.

Belongs to the herpesviridae helicase family. Associates with the primase and the primase-associated factor to form the helicase-primase complex.

It localises to the host nucleus. Its function is as follows. Component of the helicase/primase complex. Unwinds the DNA at the replication forks and generates single-stranded DNA for both leading and lagging strand synthesis. The primase synthesizes short RNA primers on the lagging strand that the polymerase elongates using dNTPs. Possesses helicase-like motifs and therefore may act as the helicase subunit of the complex. This is DNA replication helicase from Equus caballus (Horse).